A 65-amino-acid polypeptide reads, in one-letter code: Large ribosomal subunit protein bL31 (65 aa).

The Zn(2+) site is built by Cys16, Cys18, Cys36, and Cys39.

This sequence belongs to the bacterial ribosomal protein bL31 family. Type A subfamily. In terms of assembly, part of the 50S ribosomal subunit. Zn(2+) serves as cofactor.

Binds the 23S rRNA. The sequence is that of Large ribosomal subunit protein bL31 from Brevibacillus brevis (strain 47 / JCM 6285 / NBRC 100599).